The chain runs to 37 residues: Kappa-actitoxin-Bgr1a (37 aa).

The ShKT domain occupies 2–37 (CRDWFKETACRHAKSLGNCRTSQKYRANCAKTCELC). 3 cysteine pairs are disulfide-bonded: cysteine 2–cysteine 37, cysteine 11–cysteine 30, and cysteine 20–cysteine 34. Residues 25-26 (KY) are crucial for binding to potassium channels.

The protein belongs to the sea anemone type 1 potassium channel toxin family. Type 1b subfamily.

It is found in the secreted. It localises to the nematocyst. Functionally, inhibits voltage-dependent potassium channels of the Kv1 family (Kv1.1/KCNA1 (Kd=6 nM), Kv1.2/KCNA2 (Kd=15 nM), Kv1.3/KCNA3 (Kd=10-39 nM), Kv1.6/KCNA6, and KCa3.1/KCNN4 (Kd=172 nM)). The protein is Kappa-actitoxin-Bgr1a of Bunodosoma granuliferum (Red warty sea anemone).